A 469-amino-acid chain; its full sequence is Secreted triacylglycerol lipase LIP3 (469 aa).

An N-terminal signal peptide occupies residues 1 to 21 (MVSLLWKFTLLCLFLLACTSA). A disulfide bridge links Cys121 with Cys292. The active-site Nucleophile is the Ser205. A glycan (N-linked (GlcNAc...) asparagine) is linked at Asn238. Catalysis depends on residues Asp352 and His386.

It belongs to the AB hydrolase superfamily. Lipase family. Class Lip subfamily.

The protein localises to the secreted. It catalyses the reaction a triacylglycerol + H2O = a diacylglycerol + a fatty acid + H(+). The catalysed reaction is a monoacylglycerol + H2O = glycerol + a fatty acid + H(+). The enzyme catalyses a diacylglycerol + H2O = a monoacylglycerol + a fatty acid + H(+). Secreted lipase that hydrolyzes acylglycerol lipids such as triacylglycerols and consequently releases free fatty acid. Generates free oleic acid from the substrates mono- and diolein and hydrolyzes triolein in significant amounts. Due to an absence of fatty acid synthase genes in Malassezia species, secretory lipases are essential for the yeast to generate free fatty acids from degradation of sebum and assimilate them as lipid sources for growth. Plays an essential role at the pathogen-host interface during disease progression. Performs also the reverse reaction to build diacyl- and triacyl- glycerols from monoacylglycerols. The chain is Secreted triacylglycerol lipase LIP3 from Malassezia restricta (strain ATCC 96810 / NBRC 103918 / CBS 7877) (Seborrheic dermatitis infection agent).